The chain runs to 222 residues: Triosephosphate isomerase (222 aa).

10–12 is a binding site for substrate; it reads NCK. Residue His93 is the Electrophile of the active site. The active-site Proton acceptor is the Glu141. Residues Ile146, Gly180, and 201 to 202 contribute to the substrate site; that span reads AS.

This sequence belongs to the triosephosphate isomerase family. Homotetramer; dimer of dimers.

It is found in the cytoplasm. It catalyses the reaction D-glyceraldehyde 3-phosphate = dihydroxyacetone phosphate. Its pathway is carbohydrate biosynthesis; gluconeogenesis. It participates in carbohydrate degradation; glycolysis; D-glyceraldehyde 3-phosphate from glycerone phosphate: step 1/1. In terms of biological role, involved in the gluconeogenesis. Catalyzes stereospecifically the conversion of dihydroxyacetone phosphate (DHAP) to D-glyceraldehyde-3-phosphate (G3P). The sequence is that of Triosephosphate isomerase from Cenarchaeum symbiosum (strain A).